The primary structure comprises 32 residues: U5-ctenitoxin-Pn1a (32 aa).

3 disulfides stabilise this stretch: Cys3–Cys16, Cys9–Cys21, and Cys15–Cys30.

In terms of tissue distribution, expressed by the venom gland.

It localises to the secreted. Functionally, blocks voltage-gated sodium channels (Nav). Causes tail erection, scratching and a reduction in mobility at a dose level of 1.40 mg/mouse. The polypeptide is U5-ctenitoxin-Pn1a (Phoneutria nigriventer (Brazilian armed spider)).